The sequence spans 239 residues: 1-(5-phosphoribosyl)-5-[(5-phosphoribosylamino)methylideneamino] imidazole-4-carboxamide isomerase (239 aa).

Catalysis depends on D8, which acts as the Proton acceptor. The active-site Proton donor is the D129.

It belongs to the HisA/HisF family.

It localises to the cytoplasm. It catalyses the reaction 1-(5-phospho-beta-D-ribosyl)-5-[(5-phospho-beta-D-ribosylamino)methylideneamino]imidazole-4-carboxamide = 5-[(5-phospho-1-deoxy-D-ribulos-1-ylimino)methylamino]-1-(5-phospho-beta-D-ribosyl)imidazole-4-carboxamide. Its pathway is amino-acid biosynthesis; L-histidine biosynthesis; L-histidine from 5-phospho-alpha-D-ribose 1-diphosphate: step 4/9. This is 1-(5-phosphoribosyl)-5-[(5-phosphoribosylamino)methylideneamino] imidazole-4-carboxamide isomerase from Bacillus cereus (strain AH187).